The sequence spans 216 residues: ATP phosphoribosyltransferase (216 aa).

This sequence belongs to the ATP phosphoribosyltransferase family. Short subfamily. In terms of assembly, heteromultimer composed of HisG and HisZ subunits.

It is found in the cytoplasm. It catalyses the reaction 1-(5-phospho-beta-D-ribosyl)-ATP + diphosphate = 5-phospho-alpha-D-ribose 1-diphosphate + ATP. Its pathway is amino-acid biosynthesis; L-histidine biosynthesis; L-histidine from 5-phospho-alpha-D-ribose 1-diphosphate: step 1/9. Functionally, catalyzes the condensation of ATP and 5-phosphoribose 1-diphosphate to form N'-(5'-phosphoribosyl)-ATP (PR-ATP). Has a crucial role in the pathway because the rate of histidine biosynthesis seems to be controlled primarily by regulation of HisG enzymatic activity. This is ATP phosphoribosyltransferase from Chromohalobacter salexigens (strain ATCC BAA-138 / DSM 3043 / CIP 106854 / NCIMB 13768 / 1H11).